The following is a 160-amino-acid chain: Ribosomal RNA large subunit methyltransferase H (160 aa).

The S-adenosyl-L-methionine site is built by leucine 76 and glycine 108.

The protein belongs to the RNA methyltransferase RlmH family. Homodimer.

Its subcellular location is the cytoplasm. It catalyses the reaction pseudouridine(1915) in 23S rRNA + S-adenosyl-L-methionine = N(3)-methylpseudouridine(1915) in 23S rRNA + S-adenosyl-L-homocysteine + H(+). In terms of biological role, specifically methylates the pseudouridine at position 1915 (m3Psi1915) in 23S rRNA. This Rhodopseudomonas palustris (strain ATCC BAA-98 / CGA009) protein is Ribosomal RNA large subunit methyltransferase H.